A 464-amino-acid polypeptide reads, in one-letter code: Mitogen-activated protein kinase 10 (464 aa).

One can recognise a Protein kinase domain in the interval Tyr64–Ile359. ATP is bound by residues Ile70 to Val78 and Lys93. The active-site Proton acceptor is Asp189. Thr221 is subject to Phosphothreonine; by MAP2K7. The TXY motif lies at Thr221 to Tyr223. Tyr223 bears the Phosphotyrosine; by MAP2K4 mark. A disordered region spans residues Thr405–Arg464. The segment covering Val410 to Glu454 has biased composition (polar residues). 2 S-palmitoyl cysteine lipidation sites follow: Cys462 and Cys463.

The protein belongs to the protein kinase superfamily. CMGC Ser/Thr protein kinase family. MAP kinase subfamily. Interacts with MAPK8IP1/JIP-1, MAPK8IP3/JIP-3/JSAP1 and SPAG9/MAPK8IP4/JIP4. Interacts with HDAC9 and MAPKBP1. Interacts with ARRB2; the interaction enhances MAPK10 activation by MAP3K5. Interacts with SARM1. Interacts with JUND; interaction is inhibited in the presence of MEN1. It depends on Mg(2+) as a cofactor. Post-translationally, dually phosphorylated on Thr-221 and Tyr-223 by MAP2K4 and MAP2K7, which activates the enzyme. MAP2K7 shows a strong preference for Thr-221 while MAP2K4 phosphorylates Tyr-223 preferentially. Weakly autophosphorylated on threonine and tyrosine residues in vitro. In terms of processing, palmitoylation regulates subcellular location and axonal development. Brain (at protein level). Expressed specifically in neurons of the hippocampus, cortex, cerebellum, brainstem, and spinal cord. Seems to be also found in testis, and very weakly in the heart.

It is found in the cytoplasm. The protein resides in the membrane. Its subcellular location is the nucleus. It localises to the mitochondrion. It catalyses the reaction L-seryl-[protein] + ATP = O-phospho-L-seryl-[protein] + ADP + H(+). The enzyme catalyses L-threonyl-[protein] + ATP = O-phospho-L-threonyl-[protein] + ADP + H(+). With respect to regulation, activated by threonine and tyrosine phosphorylation by two dual specificity kinases, MAP2K4 and MAP2K7. MAP2K7 phosphorylates MAPK10 on Thr-221 causing a conformational change and a large increase in Vmax for the enzyme. MAP2K4 then phosphorylates Tyr-223 resulting in a further increase in Vmax. Inhibited by dual specificity phosphatases, such as DUSP1. Inhibited by HDAC9. In terms of biological role, serine/threonine-protein kinase involved in various processes such as neuronal proliferation, differentiation, migration and programmed cell death. Extracellular stimuli such as pro-inflammatory cytokines or physical stress stimulate the stress-activated protein kinase/c-Jun N-terminal kinase (SAP/JNK) signaling pathway. In this cascade, two dual specificity kinases MAP2K4/MKK4 and MAP2K7/MKK7 phosphorylate and activate MAPK10/JNK3. In turn, MAPK10/JNK3 phosphorylates a number of transcription factors, primarily components of AP-1 such as JUN and ATF2 and thus regulates AP-1 transcriptional activity. Plays regulatory roles in the signaling pathways during neuronal apoptosis. Phosphorylates the neuronal microtubule regulator STMN2. Acts in the regulation of the amyloid-beta precursor protein/APP signaling during neuronal differentiation by phosphorylating APP. Also participates in neurite growth in spiral ganglion neurons. Phosphorylates the CLOCK-BMAL1 heterodimer and plays a role in the photic regulation of the circadian clock. Phosphorylates JUND and this phosphorylation is inhibited in the presence of MEN1. In Mus musculus (Mouse), this protein is Mitogen-activated protein kinase 10 (Mapk10).